A 185-amino-acid polypeptide reads, in one-letter code: Dihydrofolate reductase 1 (185 aa).

One can recognise a DHFR domain in the interval 8-185; it reads ELVLVVAADE…QASPRPLDDL (178 aa).

It belongs to the dihydrofolate reductase family.

It carries out the reaction (6S)-5,6,7,8-tetrahydrofolate + NADP(+) = 7,8-dihydrofolate + NADPH + H(+). It participates in cofactor biosynthesis; tetrahydrofolate biosynthesis; 5,6,7,8-tetrahydrofolate from 7,8-dihydrofolate: step 1/1. Key enzyme in folate metabolism. Catalyzes an essential reaction for de novo glycine and purine synthesis, and for DNA precursor synthesis. The chain is Dihydrofolate reductase 1 (folA1) from Haloarcula marismortui (strain ATCC 43049 / DSM 3752 / JCM 8966 / VKM B-1809) (Halobacterium marismortui).